The sequence spans 257 residues: Type III pantothenate kinase (257 aa).

6–13 (DVGNTNTV) is a binding site for ATP. Substrate is bound by residues Y102 and 109–112 (GADR). The Proton acceptor role is filled by D111. D131 contributes to the K(+) binding site. An ATP-binding site is contributed by T134. Residue T186 coordinates substrate.

The protein belongs to the type III pantothenate kinase family. As to quaternary structure, homodimer. NH4(+) serves as cofactor. The cofactor is K(+).

The protein resides in the cytoplasm. It carries out the reaction (R)-pantothenate + ATP = (R)-4'-phosphopantothenate + ADP + H(+). It functions in the pathway cofactor biosynthesis; coenzyme A biosynthesis; CoA from (R)-pantothenate: step 1/5. Its function is as follows. Catalyzes the phosphorylation of pantothenate (Pan), the first step in CoA biosynthesis. In Leptospira interrogans serogroup Icterohaemorrhagiae serovar copenhageni (strain Fiocruz L1-130), this protein is Type III pantothenate kinase.